The following is a 230-amino-acid chain: MVPEYSRFYNILGYNFKDYTLLIRALTHRSKTKKNYERLEFLGDSVLSFVIAEVLYKQFTDLAEGKLSQLRSKLVKGTTLAQLASSLKMDEYIILGASEQGGNKREKILEDVFEAVIGAIYLDSDFATVKKVILKWYQPIISSINLDTIKVKDSKSKLQEILLQNALSLPEYSIETIDGKDHEQQFTVVAVSKDLNLRVKAQGTSRKKAEQKTAEKMIEMLSQQGLHEKK.

Residues 5-125 (YSRFYNILGY…VIGAIYLDSD (121 aa)) enclose the RNase III domain. Glutamate 40 serves as a coordination point for Mg(2+). Aspartate 44 is a catalytic residue. Mg(2+) contacts are provided by aspartate 111 and glutamate 114. The active site involves glutamate 114. Residues 153 to 223 (DSKSKLQEIL…AEKMIEMLSQ (71 aa)) enclose the DRBM domain.

It belongs to the ribonuclease III family. In terms of assembly, homodimer. Mg(2+) is required as a cofactor.

The protein resides in the cytoplasm. It carries out the reaction Endonucleolytic cleavage to 5'-phosphomonoester.. Digests double-stranded RNA. Involved in the processing of primary rRNA transcript to yield the immediate precursors to the large and small rRNAs (23S and 16S). Processes some mRNAs, and tRNAs when they are encoded in the rRNA operon. Processes pre-crRNA and tracrRNA of type II CRISPR loci if present in the organism. This chain is Ribonuclease 3, found in Francisella tularensis subsp. holarctica (strain FTNF002-00 / FTA).